Reading from the N-terminus, the 411-residue chain is 1-deoxy-D-xylulose 5-phosphate reductoisomerase (411 aa).

The NADPH site is built by threonine 11, glycine 12, serine 13, isoleucine 14, and asparagine 124. A 1-deoxy-D-xylulose 5-phosphate-binding site is contributed by lysine 125. Glutamate 126 provides a ligand contact to NADPH. Aspartate 150 is a binding site for Mn(2+). The 1-deoxy-D-xylulose 5-phosphate site is built by serine 151, glutamate 152, serine 186, and histidine 209. Glutamate 152 contributes to the Mn(2+) binding site. Glycine 215 lines the NADPH pocket. The 1-deoxy-D-xylulose 5-phosphate site is built by serine 222, asparagine 227, lysine 228, and glutamate 231. Glutamate 231 serves as a coordination point for Mn(2+).

It belongs to the DXR family. Requires Mg(2+) as cofactor. Mn(2+) serves as cofactor.

The enzyme catalyses 2-C-methyl-D-erythritol 4-phosphate + NADP(+) = 1-deoxy-D-xylulose 5-phosphate + NADPH + H(+). It participates in isoprenoid biosynthesis; isopentenyl diphosphate biosynthesis via DXP pathway; isopentenyl diphosphate from 1-deoxy-D-xylulose 5-phosphate: step 1/6. In terms of biological role, catalyzes the NADPH-dependent rearrangement and reduction of 1-deoxy-D-xylulose-5-phosphate (DXP) to 2-C-methyl-D-erythritol 4-phosphate (MEP). The protein is 1-deoxy-D-xylulose 5-phosphate reductoisomerase of Psychrobacter sp. (strain PRwf-1).